Reading from the N-terminus, the 184-residue chain is Envelope protein 169 (184 aa).

The Intravirion portion of the chain corresponds to 1–6 (MKKYIK). Residues 7–27 (MYLVLLIAIILFITILVIFLI) traverse the membrane as a helical segment. Residues 28-184 (SGLFYPEQNP…TVMAIPRKVL (157 aa)) lie on the Virion surface side of the membrane.

Belongs to the asfivirus envelope protein p22 family.

The protein resides in the virion membrane. Its subcellular location is the host cell membrane. The polypeptide is Envelope protein 169 (Ornithodoros (relapsing fever ticks)).